The chain runs to 86 residues: MEPVDPRLEPWKHPGSQPKTACTNCYCKKCCFHCQVCFITKALGISYGRKKRRQRRRAPQGSQTHQVSLSKQPTSQSRGDPTGPKE.

Residues 1–24 form an interaction with human CREBBP region; that stretch reads MEPVDPRLEPWKHPGSQPKTACTN. Residues 1–48 form a transactivation region; the sequence is MEPVDPRLEPWKHPGSQPKTACTNCYCKKCCFHCQVCFITKALGISYG. Residues cysteine 22, cysteine 25, and cysteine 27 each contribute to the Zn(2+) site. The segment at 22-37 is cysteine-rich; the sequence is CTNCYCKKCCFHCQVC. N6-acetyllysine; by host PCAF is present on lysine 28. Zn(2+) contacts are provided by cysteine 30, histidine 33, cysteine 34, and cysteine 37. The interval 38 to 48 is core; it reads FITKALGISYG. A compositionally biased stretch (basic residues) spans 48 to 58; that stretch reads GRKKRRQRRRA. The tract at residues 48–86 is disordered; sequence GRKKRRQRRRAPQGSQTHQVSLSKQPTSQSRGDPTGPKE. Residues 49–57 carry the Nuclear localization signal, RNA-binding (TAR), and protein transduction motif; the sequence is RKKRRQRRR. The tract at residues 49 to 86 is interaction with the host capping enzyme RNGTT; the sequence is RKKRRQRRRAPQGSQTHQVSLSKQPTSQSRGDPTGPKE. Residues lysine 50 and lysine 51 each carry the N6-acetyllysine; by host EP300 and GCN5L2 modification. Asymmetric dimethylarginine; by host PRMT6 occurs at positions 52 and 53. The span at 60 to 79 shows a compositional bias: polar residues; sequence QGSQTHQVSLSKQPTSQSRG. A Glycyl lysine isopeptide (Lys-Gly) (interchain with G-Cter in ubiquitin) cross-link involves residue lysine 71. The Cell attachment site signature appears at 78 to 80; that stretch reads RGD.

This sequence belongs to the lentiviruses Tat family. As to quaternary structure, interacts with host CCNT1. Associates with the P-TEFb complex composed at least of Tat, P-TEFb (CDK9 and CCNT1), TAR RNA, RNA Pol II. Recruits the HATs CREBBP, TAF1/TFIID, EP300, PCAF and GCN5L2. Interacts with host KAT5/Tip60; this interaction targets the latter to degradation. Interacts with the host deacetylase SIRT1. Interacts with host capping enzyme RNGTT; this interaction stimulates RNGTT. Binds to host KDR, and to the host integrins ITGAV/ITGB3 and ITGA5/ITGB1. Interacts with host KPNB1/importin beta-1 without previous binding to KPNA1/importin alpha-1. Interacts with EIF2AK2. Interacts with host nucleosome assembly protein NAP1L1; this interaction may be required for the transport of Tat within the nucleus, since the two proteins interact at the nuclear rim. Interacts with host C1QBP/SF2P32; this interaction involves lysine-acetylated Tat. Interacts with the host chemokine receptors CCR2, CCR3 and CXCR4. Interacts with host DPP4/CD26; this interaction may trigger an anti-proliferative effect. Interacts with host LDLR. Interacts with the host extracellular matrix metalloproteinase MMP1. Interacts with host PRMT6; this interaction mediates Tat's methylation. Interacts with, and is ubiquitinated by MDM2/Hdm2. Interacts with host PSMC3 and HTATIP2. Interacts with STAB1; this interaction may overcome SATB1-mediated repression of IL2 and IL2RA (interleukin) in T cells by binding to the same domain than HDAC1. Interacts (when acetylated) with human CDK13, thereby increasing HIV-1 mRNA splicing and promoting the production of the doubly spliced HIV-1 protein Nef. Interacts with host TBP; this interaction modulates the activity of transcriptional pre-initiation complex. Interacts with host RELA. Interacts with host PLSCR1; this interaction negatively regulates Tat transactivation activity by altering its subcellular distribution. In terms of processing, asymmetrical arginine methylation by host PRMT6 seems to diminish the transactivation capacity of Tat and affects the interaction with host CCNT1. Acetylation by EP300, CREBBP, GCN5L2/GCN5 and PCAF regulates the transactivation activity of Tat. EP300-mediated acetylation of Lys-50 promotes dissociation of Tat from the TAR RNA through the competitive binding to PCAF's bromodomain. In addition, the non-acetylated Tat's N-terminus can also interact with PCAF. PCAF-mediated acetylation of Lys-28 enhances Tat's binding to CCNT1. Lys-50 is deacetylated by SIRT1. Post-translationally, polyubiquitination by host MDM2 does not target Tat to degradation, but activates its transactivation function and fosters interaction with CCNT1 and TAR RNA. In terms of processing, phosphorylated by EIF2AK2 on serine and threonine residues adjacent to the basic region important for TAR RNA binding and function. Phosphorylation of Tat by EIF2AK2 is dependent on the prior activation of EIF2AK2 by dsRNA.

The protein localises to the host nucleus. Its subcellular location is the host nucleolus. It is found in the host cytoplasm. It localises to the secreted. In terms of biological role, transcriptional activator that increases RNA Pol II processivity, thereby increasing the level of full-length viral transcripts. Recognizes a hairpin structure at the 5'-LTR of the nascent viral mRNAs referred to as the transactivation responsive RNA element (TAR) and recruits the cyclin T1-CDK9 complex (P-TEFb complex) that will in turn hyperphosphorylate the RNA polymerase II to allow efficient elongation. The CDK9 component of P-TEFb and other Tat-activated kinases hyperphosphorylate the C-terminus of RNA Pol II that becomes stabilized and much more processive. Other factors such as HTATSF1/Tat-SF1, SUPT5H/SPT5, and HTATIP2 are also important for Tat's function. Besides its effect on RNA Pol II processivity, Tat induces chromatin remodeling of proviral genes by recruiting the histone acetyltransferases (HATs) CREBBP, EP300 and PCAF to the chromatin. This also contributes to the increase in proviral transcription rate, especially when the provirus integrates in transcriptionally silent region of the host genome. To ensure maximal activation of the LTR, Tat mediates nuclear translocation of NF-kappa-B by interacting with host RELA. Through its interaction with host TBP, Tat may also modulate transcription initiation. Tat can reactivate a latently infected cell by penetrating in it and transactivating its LTR promoter. In the cytoplasm, Tat is thought to act as a translational activator of HIV-1 mRNAs. Extracellular circulating Tat can be endocytosed by surrounding uninfected cells via the binding to several surface receptors such as CD26, CXCR4, heparan sulfate proteoglycans (HSPG) or LDLR. Neurons are rarely infected, but they internalize Tat via their LDLR. Through its interaction with nuclear HATs, Tat is potentially able to control the acetylation-dependent cellular gene expression. Modulates the expression of many cellular genes involved in cell survival, proliferation or in coding for cytokines or cytokine receptors. Tat plays a role in T-cell and neurons apoptosis. Tat induced neurotoxicity and apoptosis probably contribute to neuroAIDS. Circulating Tat also acts as a chemokine-like and/or growth factor-like molecule that binds to specific receptors on the surface of the cells, affecting many cellular pathways. In the vascular system, Tat binds to ITGAV/ITGB3 and ITGA5/ITGB1 integrins dimers at the surface of endothelial cells and competes with bFGF for heparin-binding sites, leading to an excess of soluble bFGF. This chain is Protein Tat, found in Human immunodeficiency virus type 1 group M subtype B (isolate PCV12) (HIV-1).